A 138-amino-acid polypeptide reads, in one-letter code: Basic phospholipase A2 vaspin B chain (138 aa).

Residues 1–16 (MRILWIVAVCLIGVEG) form the signal peptide. 7 cysteine pairs are disulfide-bonded: cysteine 42–cysteine 131, cysteine 44–cysteine 60, cysteine 59–cysteine 111, cysteine 65–cysteine 138, cysteine 66–cysteine 104, cysteine 73–cysteine 97, and cysteine 91–cysteine 102. Positions 43, 45, and 47 each coordinate Ca(2+). Residue histidine 63 is part of the active site. Position 64 (aspartate 64) interacts with Ca(2+). Residue aspartate 105 is part of the active site.

This sequence belongs to the phospholipase A2 family. Group II subfamily. D49 sub-subfamily. Heterodimer of a weakly toxic basic protein having phospholipase A2 activity (B chain (AC Q8JFG1)) and a non-toxic acidic protein functioning as its inhibitor (A chain). It depends on Ca(2+) as a cofactor. In terms of tissue distribution, expressed by the venom gland.

It localises to the secreted. The catalysed reaction is a 1,2-diacyl-sn-glycero-3-phosphocholine + H2O = a 1-acyl-sn-glycero-3-phosphocholine + a fatty acid + H(+). Its function is as follows. Heterodimer: postsynaptic neurotoxin. Functionally, monomer: snake venom phospholipase A2 (PLA2) that shows postsynaptic neurotoxicity. PLA2 catalyzes the calcium-dependent hydrolysis of the 2-acyl groups in 3-sn-phosphoglycerides. This is Basic phospholipase A2 vaspin B chain from Vipera aspis aspis (Aspic viper).